A 96-amino-acid chain; its full sequence is Salivary protein FS50 (96 aa).

The first 19 residues, 1–19 (MKWILVLALVCLAVEYSYS), serve as a signal peptide directing secretion. 4 disulfide bridges follow: Cys26–Cys71, Cys50–Cys78, Cys63–Cys91, and Cys67–Cys93.

Its subcellular location is the secreted. Salivary protein that inhibits host voltage-gated sodium channel Nav1.5/SCN5A. This is Salivary protein FS50 from Xenopsylla cheopis (Oriental rat flea).